The chain runs to 207 residues: Dephospho-CoA kinase (207 aa).

The region spanning 12–207 (LIGITGMIGG…LYSTLLGKML (196 aa)) is the DPCK domain. An ATP-binding site is contributed by 20-25 (GGGKST).

This sequence belongs to the CoaE family.

The protein localises to the cytoplasm. It catalyses the reaction 3'-dephospho-CoA + ATP = ADP + CoA + H(+). It participates in cofactor biosynthesis; coenzyme A biosynthesis; CoA from (R)-pantothenate: step 5/5. Its function is as follows. Catalyzes the phosphorylation of the 3'-hydroxyl group of dephosphocoenzyme A to form coenzyme A. In Leptospira interrogans serogroup Icterohaemorrhagiae serovar copenhageni (strain Fiocruz L1-130), this protein is Dephospho-CoA kinase.